The chain runs to 293 residues: 4-hydroxy-tetrahydrodipicolinate synthase (293 aa).

Residue Thr44 participates in pyruvate binding. Residue Tyr132 is the Proton donor/acceptor of the active site. The active-site Schiff-base intermediate with substrate is Lys161. Ile203 is a binding site for pyruvate.

This sequence belongs to the DapA family. Homotetramer; dimer of dimers.

It is found in the cytoplasm. It catalyses the reaction L-aspartate 4-semialdehyde + pyruvate = (2S,4S)-4-hydroxy-2,3,4,5-tetrahydrodipicolinate + H2O + H(+). It participates in amino-acid biosynthesis; L-lysine biosynthesis via DAP pathway; (S)-tetrahydrodipicolinate from L-aspartate: step 3/4. In terms of biological role, catalyzes the condensation of (S)-aspartate-beta-semialdehyde [(S)-ASA] and pyruvate to 4-hydroxy-tetrahydrodipicolinate (HTPA). This Persephonella marina (strain DSM 14350 / EX-H1) protein is 4-hydroxy-tetrahydrodipicolinate synthase.